We begin with the raw amino-acid sequence, 89 residues long: Small ribosomal subunit protein uS15 (89 aa).

It belongs to the universal ribosomal protein uS15 family. In terms of assembly, part of the 30S ribosomal subunit. Forms a bridge to the 50S subunit in the 70S ribosome, contacting the 23S rRNA.

One of the primary rRNA binding proteins, it binds directly to 16S rRNA where it helps nucleate assembly of the platform of the 30S subunit by binding and bridging several RNA helices of the 16S rRNA. Its function is as follows. Forms an intersubunit bridge (bridge B4) with the 23S rRNA of the 50S subunit in the ribosome. The polypeptide is Small ribosomal subunit protein uS15 (Pectobacterium atrosepticum (strain SCRI 1043 / ATCC BAA-672) (Erwinia carotovora subsp. atroseptica)).